The sequence spans 475 residues: Aspartyl/glutamyl-tRNA(Asn/Gln) amidotransferase subunit B (475 aa).

This sequence belongs to the GatB/GatE family. GatB subfamily. As to quaternary structure, heterotrimer of A, B and C subunits.

The enzyme catalyses L-glutamyl-tRNA(Gln) + L-glutamine + ATP + H2O = L-glutaminyl-tRNA(Gln) + L-glutamate + ADP + phosphate + H(+). It carries out the reaction L-aspartyl-tRNA(Asn) + L-glutamine + ATP + H2O = L-asparaginyl-tRNA(Asn) + L-glutamate + ADP + phosphate + 2 H(+). Its function is as follows. Allows the formation of correctly charged Asn-tRNA(Asn) or Gln-tRNA(Gln) through the transamidation of misacylated Asp-tRNA(Asn) or Glu-tRNA(Gln) in organisms which lack either or both of asparaginyl-tRNA or glutaminyl-tRNA synthetases. The reaction takes place in the presence of glutamine and ATP through an activated phospho-Asp-tRNA(Asn) or phospho-Glu-tRNA(Gln). In Staphylococcus carnosus (strain TM300), this protein is Aspartyl/glutamyl-tRNA(Asn/Gln) amidotransferase subunit B.